Consider the following 215-residue polypeptide: Cytochrome b6 (215 aa).

The helical transmembrane segment at 32–52 threads the bilayer; that stretch reads IFYCLGGITLTCFLVQVATGF. Cys-35 lines the heme c pocket. The heme b site is built by His-86 and His-100. Transmembrane regions (helical) follow at residues 90 to 110, 116 to 136, and 186 to 206; these read ASMMVLMMILHVFRVYLTGGF, LTWVTGVVLAVLTASFGVTGY, and LHTFVLPLLTAVFMLMHFLMI. His-187 and His-202 together coordinate heme b.

It belongs to the cytochrome b family. PetB subfamily. The 4 large subunits of the cytochrome b6-f complex are cytochrome b6, subunit IV (17 kDa polypeptide, PetD), cytochrome f and the Rieske protein, while the 4 small subunits are PetG, PetL, PetM and PetN. The complex functions as a dimer. Heme b is required as a cofactor. It depends on heme c as a cofactor.

The protein resides in the plastid. Its subcellular location is the chloroplast thylakoid membrane. Functionally, component of the cytochrome b6-f complex, which mediates electron transfer between photosystem II (PSII) and photosystem I (PSI), cyclic electron flow around PSI, and state transitions. The protein is Cytochrome b6 of Nicotiana tabacum (Common tobacco).